Consider the following 179-residue polypeptide: Small ribosomal subunit protein uS7 (179 aa).

It belongs to the universal ribosomal protein uS7 family. As to quaternary structure, part of the 30S ribosomal subunit. Contacts proteins S9 and S11.

One of the primary rRNA binding proteins, it binds directly to 16S rRNA where it nucleates assembly of the head domain of the 30S subunit. Is located at the subunit interface close to the decoding center, probably blocks exit of the E-site tRNA. The protein is Small ribosomal subunit protein uS7 of Shigella flexneri serotype 5b (strain 8401).